The chain runs to 470 residues: 3-isopropylmalate dehydratase large subunit (470 aa).

[4Fe-4S] cluster contacts are provided by Cys-349, Cys-410, and Cys-413.

Belongs to the aconitase/IPM isomerase family. LeuC type 1 subfamily. Heterodimer of LeuC and LeuD. [4Fe-4S] cluster is required as a cofactor.

It carries out the reaction (2R,3S)-3-isopropylmalate = (2S)-2-isopropylmalate. Its pathway is amino-acid biosynthesis; L-leucine biosynthesis; L-leucine from 3-methyl-2-oxobutanoate: step 2/4. Catalyzes the isomerization between 2-isopropylmalate and 3-isopropylmalate, via the formation of 2-isopropylmaleate. The polypeptide is 3-isopropylmalate dehydratase large subunit (Nitrosomonas europaea (strain ATCC 19718 / CIP 103999 / KCTC 2705 / NBRC 14298)).